A 426-amino-acid chain; its full sequence is Serine--tRNA ligase (426 aa).

231 to 233 (TAE) provides a ligand contact to L-serine. 262–264 (RSE) lines the ATP pocket. E285 provides a ligand contact to L-serine. 349–352 (EISS) is an ATP binding site. S385 lines the L-serine pocket.

The protein belongs to the class-II aminoacyl-tRNA synthetase family. Type-1 seryl-tRNA synthetase subfamily. Homodimer. The tRNA molecule binds across the dimer.

Its subcellular location is the cytoplasm. It catalyses the reaction tRNA(Ser) + L-serine + ATP = L-seryl-tRNA(Ser) + AMP + diphosphate + H(+). It carries out the reaction tRNA(Sec) + L-serine + ATP = L-seryl-tRNA(Sec) + AMP + diphosphate + H(+). Its pathway is aminoacyl-tRNA biosynthesis; selenocysteinyl-tRNA(Sec) biosynthesis; L-seryl-tRNA(Sec) from L-serine and tRNA(Sec): step 1/1. Functionally, catalyzes the attachment of serine to tRNA(Ser). Is also able to aminoacylate tRNA(Sec) with serine, to form the misacylated tRNA L-seryl-tRNA(Sec), which will be further converted into selenocysteinyl-tRNA(Sec). The polypeptide is Serine--tRNA ligase (Lysinibacillus sphaericus (strain C3-41)).